We begin with the raw amino-acid sequence, 95 residues long: Enhancer of yellow 2b transcription factor (95 aa).

This sequence belongs to the ENY2 family. Expressed specifically in testis.

In terms of biological role, testis-specific paralog of the ubiquitously expressed transcription and mRNA export factor e(y)2. Cannot functionally replace e(y)2. In Drosophila melanogaster (Fruit fly), this protein is Enhancer of yellow 2b transcription factor (e(y)2b).